Here is a 222-residue protein sequence, read N- to C-terminus: UPF0502 protein PBPRB0676 (222 aa).

The protein belongs to the UPF0502 family.

The sequence is that of UPF0502 protein PBPRB0676 from Photobacterium profundum (strain SS9).